The primary structure comprises 603 residues: MKLRYLNILKEKLGREPTFVELQAFSVMWSEHCGYSHTKKYIRRLPKTGFEGNAGVVNLDDYYSVAFKIESHNHPSAIEPYNGAATGVGGIIRDVLAMGARPTAIFDSLHMSRIIDGIIEGIADYGNSIGVPTVGGELRISSLYAHNPLVNVLAAGVVRNDMLVDSKASRPGQVIVIFGGATGRDGIHGASFASEDLTGDKATKLSIQVGDPFAEKMLIEAFLEMVEEGLVEGAQDLGAGGVLSATSELVAKGNLGAIVHLDRVPLREPDMEPWEILISESQERMAVVTSPQKASRILEIARKHLLFGDVVAEVIEEPVYRVMYRNDLVMEVPVQLLANAPEEDIVEYTPGKIPEFKRVEFEEVNAREVFEQYDHMVGTDTVVPPGFGAAVMRIKRDGGYSLVTHSRADLALQDTYWGTLIAVLESVRKTLSVGAEPLAITNCVNYGDPDVDPVGLSAMMTALKNACEFSGVPVASGNASLYNTYQGKPIPPTLVVGMLGKVNPQKVAKPKPSKVFAVGWNDFELEREKELWRAIRKLSEEGAFILSSSQLLTRTHVETFREYGLKIEVKLPEVRPAHQMVLVFSERTPVVDVPVKEIGTLSR.

The active site involves histidine 32. ATP contacts are provided by tyrosine 35 and lysine 68. Glutamate 70 is a Mg(2+) binding site. Residues 71–74 and arginine 93 each bind substrate; that span reads SHNH. Histidine 72 functions as the Proton acceptor in the catalytic mechanism. Aspartate 94 contributes to the Mg(2+) binding site. Residues aspartate 107 and 136-139 contribute to the ATP site; that span reads GELR. Substrate is bound by residues glycine 189 and glutamine 208. Aspartate 236 is a binding site for Mg(2+). 280–282 contributes to the substrate binding site; the sequence is ESQ. ATP-binding residues include glycine 388, lysine 429, asparagine 442, and glycine 477. Asparagine 478 provides a ligand contact to Mg(2+). Substrate is bound at residue serine 480. ATP is bound by residues serine 549 and histidine 556.

It belongs to the FGAMS family. As to quaternary structure, monomer. Part of the FGAM synthase complex composed of 1 PurL, 1 PurQ and 2 PurS subunits.

The protein localises to the cytoplasm. The enzyme catalyses N(2)-formyl-N(1)-(5-phospho-beta-D-ribosyl)glycinamide + L-glutamine + ATP + H2O = 2-formamido-N(1)-(5-O-phospho-beta-D-ribosyl)acetamidine + L-glutamate + ADP + phosphate + H(+). The protein operates within purine metabolism; IMP biosynthesis via de novo pathway; 5-amino-1-(5-phospho-D-ribosyl)imidazole from N(2)-formyl-N(1)-(5-phospho-D-ribosyl)glycinamide: step 1/2. Part of the phosphoribosylformylglycinamidine synthase complex involved in the purines biosynthetic pathway. Catalyzes the ATP-dependent conversion of formylglycinamide ribonucleotide (FGAR) and glutamine to yield formylglycinamidine ribonucleotide (FGAM) and glutamate. The FGAM synthase complex is composed of three subunits. PurQ produces an ammonia molecule by converting glutamine to glutamate. PurL transfers the ammonia molecule to FGAR to form FGAM in an ATP-dependent manner. PurS interacts with PurQ and PurL and is thought to assist in the transfer of the ammonia molecule from PurQ to PurL. In Thermotoga maritima (strain ATCC 43589 / DSM 3109 / JCM 10099 / NBRC 100826 / MSB8), this protein is Phosphoribosylformylglycinamidine synthase subunit PurL.